A 482-amino-acid polypeptide reads, in one-letter code: Catalase (482 aa).

Residues H53 and N126 contribute to the active site. Residue Y336 participates in heme binding.

It belongs to the catalase family. The cofactor is heme.

Its subcellular location is the periplasm. It catalyses the reaction 2 H2O2 = O2 + 2 H2O. Functionally, decomposes hydrogen peroxide into water and oxygen; serves to protect cells from the toxic effects of hydrogen peroxide. Could protect cells in nodules which have a high potential to produce hydrogen peroxide because of the strong reducing conditions required for nitrogen fixation and the action of several proteins. The sequence is that of Catalase (katA) from Aliivibrio fischeri (strain ATCC 700601 / ES114) (Vibrio fischeri).